The sequence spans 253 residues: Carboxy-S-adenosyl-L-methionine synthase (253 aa).

S-adenosyl-L-methionine contacts are provided by residues Tyr-49, 74-76, 98-99, and Asn-141; these read GCS and DN.

Belongs to the class I-like SAM-binding methyltransferase superfamily. Cx-SAM synthase family.

It catalyses the reaction prephenate + S-adenosyl-L-methionine = carboxy-S-adenosyl-L-methionine + 3-phenylpyruvate + H2O. Functionally, catalyzes the conversion of S-adenosyl-L-methionine (SAM) to carboxy-S-adenosyl-L-methionine (Cx-SAM). The sequence is that of Carboxy-S-adenosyl-L-methionine synthase from Trichodesmium erythraeum (strain IMS101).